The primary structure comprises 60 residues: UPF0434 protein Ssed_2824 (60 aa).

Belongs to the UPF0434 family.

The sequence is that of UPF0434 protein Ssed_2824 from Shewanella sediminis (strain HAW-EB3).